Consider the following 162-residue polypeptide: Sorting nexin-3 (162 aa).

Ala-2 carries the N-acetylalanine modification. In terms of domain architecture, PX spans 27–151 (NFLEIDVSNP…HMFLQDEIID (125 aa)). Position 43 is an omega-N-methylarginine (Arg-43). A 1,2-diacyl-sn-glycero-3-phospho-(1D-myo-inositol-3-phosphate)-binding residues include Arg-70, Ser-72, Lys-95, and Arg-118. Ser-72 carries the phosphoserine modification. A Glycyl lysine isopeptide (Lys-Gly) (interchain with G-Cter in SUMO2) cross-link involves residue Lys-95. Positions 147–162 (DEIIDKSYTPSKIRHA) are binds predominantly to PtdIns(P5) and weaker to PtdIns(P3) abd PtdIns(P4); involved in neurite outgrowth regulation.

The protein belongs to the sorting nexin family. As to quaternary structure, interacts with VPS26A, VPS29. Interacts with VPS35; the interaction with VPS35 is direct. The association with the retromer CSC subcomplex subunits is proposed to represent a functional distinct retromer variant described as SNX3-retromer complex. Interacts with USP10 and SCNN1A. Interacts with TRFC. Interacts with SNX8; 2 molecules of SNX8 seems to associate with one molecule of SNX3. Interacts with PTPRU. Interacts with MON2 and DOP1B. Ubiquitinated, leading to its proteasomal degradation. Deubiquitinated by USP10. As to expression, highly expressed in developing red cells and hematopoietic tissues.

The protein resides in the early endosome. Its subcellular location is the cytoplasmic vesicle. It localises to the phagosome. Phosphoinositide-binding protein required for multivesicular body formation. Specifically binds phosphatidylinositol 3-phosphate (PtdIns(P3)). Can also bind phosphatidylinositol 4-phosphate (PtdIns(P4)), phosphatidylinositol 5-phosphate (PtdIns(P5)) and phosphatidylinositol 3,5-biphosphate (PtdIns(3,5)P2). Plays a role in protein transport between cellular compartments. Together with RAB7A facilitates endosome membrane association of the retromer cargo-selective subcomplex (CSC). May act in part as component of the SNX3-retromer complex which mediates the retrograde endosome-to-TGN transport of WLS distinct from the SNX-BAR retromer pathway. Promotes stability and cell surface expression of epithelial sodium channel (ENAC) subunits SCNN1A and SCNN1G. Not involved in EGFR degradation. Involved in the regulation of phagocytosis in dendritic cells possibly by regulating EEA1 recruitment to the nascent phagosomes. Involved in iron homeostasis through regulation of endocytic recycling of the transferrin receptor Tfrc presuambly by delivering the transferrin:transferrin receptor complex to recycling endosomes; the function may involve the CSC retromer subcomplex. Involved in regulation of neurite outgrowth in primary neurons. In Mus musculus (Mouse), this protein is Sorting nexin-3 (Snx3).